Here is a 340-residue protein sequence, read N- to C-terminus: UDP-N-acetylglucosamine--N-acetylmuramyl-(pentapeptide) pyrophosphoryl-undecaprenol N-acetylglucosamine transferase (340 aa).

UDP-N-acetyl-alpha-D-glucosamine is bound by residues 10 to 12 (TGG), N110, S171, and Q272.

This sequence belongs to the glycosyltransferase 28 family. MurG subfamily.

It localises to the cell membrane. It carries out the reaction di-trans,octa-cis-undecaprenyl diphospho-N-acetyl-alpha-D-muramoyl-L-alanyl-D-glutamyl-meso-2,6-diaminopimeloyl-D-alanyl-D-alanine + UDP-N-acetyl-alpha-D-glucosamine = di-trans,octa-cis-undecaprenyl diphospho-[N-acetyl-alpha-D-glucosaminyl-(1-&gt;4)]-N-acetyl-alpha-D-muramoyl-L-alanyl-D-glutamyl-meso-2,6-diaminopimeloyl-D-alanyl-D-alanine + UDP + H(+). The protein operates within cell wall biogenesis; peptidoglycan biosynthesis. Its function is as follows. Cell wall formation. Catalyzes the transfer of a GlcNAc subunit on undecaprenyl-pyrophosphoryl-MurNAc-pentapeptide (lipid intermediate I) to form undecaprenyl-pyrophosphoryl-MurNAc-(pentapeptide)GlcNAc (lipid intermediate II). This Wolbachia pipientis subsp. Culex pipiens (strain wPip) protein is UDP-N-acetylglucosamine--N-acetylmuramyl-(pentapeptide) pyrophosphoryl-undecaprenol N-acetylglucosamine transferase.